The sequence spans 241 residues: N-acetylmuramoyl-L-alanine amidase Rv3717 (241 aa).

Positions 1–24 are cleaved as a signal peptide; that stretch reads MIVGVLVAAATPIISSASATPANI. The MurNAc-LAA domain maps to 29-230; it reads VFIDPGHNGA…KYANALVRGV (202 aa). H35 is a Zn(2+) binding site. The tract at residues 45 to 69 is disordered; it reads RQVPTGRGGTKNCQASGTSTNSGYP. Over residues 55 to 67 the composition is skewed to polar residues; that stretch reads KNCQASGTSTNSG. C57 and C105 are oxidised to a cystine. Zn(2+)-binding residues include E70 and H125. E200 functions as the Proton donor/acceptor in the catalytic mechanism.

Belongs to the N-acetylmuramoyl-L-alanine amidase 3 family. As to quaternary structure, monomer. It depends on Zn(2+) as a cofactor.

It localises to the periplasm. It catalyses the reaction Hydrolyzes the link between N-acetylmuramoyl residues and L-amino acid residues in certain cell-wall glycopeptides.. The protein operates within cell wall degradation; peptidoglycan degradation. The structure reveals a short flexible hairpin turn that partially occludes the active site and may be involved in autoregulation. Cell-wall hydrolase that hydrolyzes the amide bond between N-acetylmuramic acid and L-alanine in cell-wall glycopeptides. Is able to hydrolyze the cell walls of several bacterial species (i.e. Paenibacillus sp., B.avium, E.coli DH5alpha, E.aerogenes, L.acidophilus, B.thuringiensis, B.pumilus, B.subtilis and E.coli W3110), thereby showing that it is a cell-wall hydrolase with broad-spectrum activity. May have a role in peptidoglycan fragment recycling. In Mycobacterium tuberculosis (strain ATCC 25618 / H37Rv), this protein is N-acetylmuramoyl-L-alanine amidase Rv3717.